A 155-amino-acid polypeptide reads, in one-letter code: MGTRGPIGKRDEERVRRNTPDSPTDTIQMPGLVTIPEMGDLSHDGRTHQLVKDMYESIKQSAAVKYYEPTDWQMARLALYTLNQELIAAENNGKPVGAMKLTAINQMLSALLLTEGDRRRVRLEVERAPADPTGGKVVDVTDVLKQRLAKASGGS.

The tract at residues methionine 1–threonine 26 is disordered. Residues glycine 8–threonine 19 are compositionally biased toward basic and acidic residues.

The polypeptide is Gene 5 protein (5) (Mycobacterium phage L5 (Mycobacteriophage L5)).